The chain runs to 311 residues: MTEVVKIYQLVENLSLEVVYGDEESLNRTIKTGEISRPGLELTGYFNYYSHDRLQLFGSKEITFAERMMPEERLLVMRRLCAKDTPAFIVSRGLEIPEELITAAKENGVSVLRSPISTSRLLGELSSYLDGRLAVRTSVHGVLVDVYGLGVLIQGDSGIGKSETALELIKRGHRLIADDRVDVYQQDELTVVGEPPKILQHLIEIRGIGIIDVMNLFGASAVRGFMQVQLVVYLEAWEKDKKYDRLGSDDAMVEIANVDVPQIRIPVKTGRNVAIIIEVAAMNFRAKTMGYDATKTFEERLTRLIEENSGE.

Catalysis depends on residues histidine 140 and lysine 161. Position 155 to 162 (155 to 162) interacts with ATP; that stretch reads GDSGIGKS. Mg(2+) is bound at residue serine 162. The Proton acceptor; for phosphorylation activity. Proton donor; for dephosphorylation activity role is filled by aspartate 179. An important for the catalytic mechanism of both phosphorylation and dephosphorylation region spans residues 203–212; that stretch reads IEIRGIGIID. Glutamate 204 lines the Mg(2+) pocket. The active site involves arginine 245. Residues 266–271 are important for the catalytic mechanism of dephosphorylation; the sequence is PVKTGR.

It belongs to the HPrK/P family. In terms of assembly, homohexamer. Requires Mg(2+) as cofactor.

The catalysed reaction is [HPr protein]-L-serine + ATP = [HPr protein]-O-phospho-L-serine + ADP + H(+). The enzyme catalyses [HPr protein]-O-phospho-L-serine + phosphate + H(+) = [HPr protein]-L-serine + diphosphate. Its function is as follows. Catalyzes the ATP- as well as the pyrophosphate-dependent phosphorylation of a specific serine residue in HPr, a phosphocarrier protein of the phosphoenolpyruvate-dependent sugar phosphotransferase system (PTS). HprK/P also catalyzes the pyrophosphate-producing, inorganic phosphate-dependent dephosphorylation (phosphorolysis) of seryl-phosphorylated HPr (P-Ser-HPr). The two antagonistic activities of HprK/P are regulated by several intracellular metabolites, which change their concentration in response to the absence or presence of rapidly metabolisable carbon sources (glucose, fructose, etc.) in the growth medium. Therefore, by controlling the phosphorylation state of HPr, HPrK/P is a sensor enzyme that plays a major role in the regulation of carbon metabolism and sugar transport: it mediates carbon catabolite repression (CCR), and regulates PTS-catalyzed carbohydrate uptake and inducer exclusion. The protein is HPr kinase/phosphorylase (hprK) of Enterococcus faecalis (strain ATCC 700802 / V583).